A 466-amino-acid polypeptide reads, in one-letter code: SVGFKAGVKEYKLTYYTPEYETKDTDILAAFRVTPQPGVPPEEAGAAVAAESSTGTWTTVWTDGLTSLDRYKGRCYHIEPVPGEEDQYIAYVAYPLDLFEEGSVTNMLTSIVGNVFGFKALRALRLEDLRIPPAYIKTFQGPPHGIQVERDKLNKYGRPLLGCTIKPKLGLSAKNYGRAVYECLRGGLDFTKDDENVNSQPFMRWRDRFLFCAEAIFKAQAETGEIKGHYLNATAGTCEEMYKRAVFARELGAPIVMHDYLTGGFTANTSLAHYCRDNGLLLHIHRAMHAVIDRQKNHGMHFRVLAKALRMSGGDHIHAGTVVGKLEGERDITLGFVDLLRDDFIEKDRSRGIYFTQDWVSLPGVLAVASGGIHVWHMPALTEIFGDDSVLQFGGGTLGHPWGNAPGAVANRVALEACVQARNEGRDLAVEGNEIIREASKWSPELAAACEVWKEIRFNFKAVDTL.

Position 5 is an N6,N6,N6-trimethyllysine (Lys-5). Residues Asn-114 and Thr-164 each contribute to the substrate site. Lys-166 functions as the Proton acceptor in the catalytic mechanism. Position 168 (Lys-168) interacts with substrate. Mg(2+) is bound by residues Lys-192, Asp-194, and Glu-195. Lys-192 carries the post-translational modification N6-carboxylysine. The active-site Proton acceptor is His-285. Arg-286, His-318, and Ser-370 together coordinate substrate.

It belongs to the RuBisCO large chain family. Type I subfamily. Heterohexadecamer of 8 large chains and 8 small chains; disulfide-linked. The disulfide link is formed within the large subunit homodimers. Mg(2+) is required as a cofactor. Post-translationally, the disulfide bond which can form in the large chain dimeric partners within the hexadecamer appears to be associated with oxidative stress and protein turnover.

It localises to the plastid. It is found in the chloroplast. The enzyme catalyses 2 (2R)-3-phosphoglycerate + 2 H(+) = D-ribulose 1,5-bisphosphate + CO2 + H2O. It carries out the reaction D-ribulose 1,5-bisphosphate + O2 = 2-phosphoglycolate + (2R)-3-phosphoglycerate + 2 H(+). In terms of biological role, ruBisCO catalyzes two reactions: the carboxylation of D-ribulose 1,5-bisphosphate, the primary event in carbon dioxide fixation, as well as the oxidative fragmentation of the pentose substrate in the photorespiration process. Both reactions occur simultaneously and in competition at the same active site. In Adenium obesum (Desert rose), this protein is Ribulose bisphosphate carboxylase large chain.